A 1091-amino-acid chain; its full sequence is ATP-citrate synthase (1091 aa).

The ATP-grasp domain maps to 4 to 265 (KAISEQTGKE…LDAKSGASLK (262 aa)). Lys58, Arg66, Gly67, Pro109, Val111, and Glu118 together coordinate ATP. Tyr131 is subject to Phosphotyrosine. Asp216 is an ATP binding site. Residues Asp257, Ser260, and Ala262 each coordinate Mg(2+). The residue at position 263 (Ser263) is a Phosphoserine. The citrate site is built by Gly309, Asn346, Thr348, Tyr364, and Arg379. The segment covering 442–457 (SGSTSTPAPSRTASFS) has biased composition (low complexity). The disordered stretch occupies residues 442–471 (SGSTSTPAPSRTASFSESRTDEVAPAKKAK). A Phosphothreonine modification is found at Thr447. A Phosphoserine modification is found at Ser451. The residue at position 455 (Ser455) is a Phosphoserine; by PKA and PKB/AKT1 or PKB/AKT2 or BCKDK. The residue at position 459 (Ser459) is a Phosphoserine. Lys530, Lys536, and Lys544 each carry N6-acetyllysine; alternate. Residues Lys530, Lys536, and Lys544 each participate in a glycyl lysine isopeptide (Lys-Gly) (interchain with G-Cter in ubiquitin); alternate cross-link. Thr629 bears the Phosphothreonine mark. Ser653 is subject to Phosphoserine. Tyr672 is subject to Phosphotyrosine. The Tele-phosphohistidine intermediate role is filled by His750. 769-779 (LKEAGVFVPRS) is a CoA binding site. Residue Ser829 is modified to Phosphoserine. An N6-acetyllysine mark is found at Lys938, Lys958, Lys968, and Lys1067. Position 1090 is a phosphoserine (Ser1090).

This sequence in the N-terminal section; belongs to the succinate/malate CoA ligase beta subunit family. The protein in the C-terminal section; belongs to the succinate/malate CoA ligase alpha subunit family. Homotetramer. Mg(2+) serves as cofactor. Phosphorylated by PKA and GSK3 in a sequential manner; phosphorylation results in activation of its activity. Phosphorylation on Thr-447 and Ser-451 depends on the phosphorylation state of Ser-455. Phosphorylation on Ser-455 is decreased by prior phosphorylation on the other 2 residues. Phosphorylated at Ser-455 by BCKDK and dephosphorylated by protein phosphatase PPM1K. In terms of processing, ISGylated. Post-translationally, acetylated at Lys-530, Lys-536 and Lys-544 by KAT2B/PCAF. Acetylation is promoted by glucose and stabilizes the protein, probably by preventing ubiquitination at the same sites. Acetylation promotes de novo lipid synthesis. Deacetylated by SIRT2. Ubiquitinated at Lys-530, Lys-536 and Lys-544 by the BCR(KLHL25) E3 ubiquitin ligase complex and UBR4, leading to its degradation. Ubiquitination is probably inhibited by acetylation at same site. BCR(KLHL25)-mediated degradation of ACLY promotes fatty acid oxidation and is required for differentiation of inducible regulatory T (iTreg) cells.

The protein localises to the cytoplasm. It localises to the cytosol. The catalysed reaction is oxaloacetate + acetyl-CoA + ADP + phosphate = citrate + ATP + CoA. With respect to regulation, phosphorylation results in activation of its activity. Glucose 6-phosphate, fructose 6-phosphate, fructose 2,6-bisphosphate, ribulose 5-phosphate, and fructose 1,6-bisphosphate also act as activators. Catalyzes the cleavage of citrate into oxaloacetate and acetyl-CoA, the latter serving as common substrate in multiple biochemical reactions in protein, carbohydrate and lipid metabolism. This chain is ATP-citrate synthase (ACLY), found in Bos taurus (Bovine).